Here is a 942-residue protein sequence, read N- to C-terminus: UvrABC system protein A (942 aa).

32–39 contributes to the ATP binding site; it reads GLSGSGKS. The segment at 251–278 adopts a C4-type zinc-finger fold; sequence CPVCGFTVPELEPRLFSFNAPFGSCPTC. 2 consecutive ABC transporter domains span residues 308-589 and 609-937; these read WNPI…KKSI and GNGR…HYLK. 641–648 is an ATP binding site; that stretch reads GVSGSGKS. The C4-type zinc-finger motif lies at 740–766; it reads CEACSGDGIIKIEMHFLPDVYVPCEVC.

Belongs to the ABC transporter superfamily. UvrA family. As to quaternary structure, forms a heterotetramer with UvrB during the search for lesions.

The protein localises to the cytoplasm. Its function is as follows. The UvrABC repair system catalyzes the recognition and processing of DNA lesions. UvrA is an ATPase and a DNA-binding protein. A damage recognition complex composed of 2 UvrA and 2 UvrB subunits scans DNA for abnormalities. When the presence of a lesion has been verified by UvrB, the UvrA molecules dissociate. The sequence is that of UvrABC system protein A from Streptococcus pyogenes serotype M6 (strain ATCC BAA-946 / MGAS10394).